We begin with the raw amino-acid sequence, 694 residues long: Zinc finger BED domain-containing protein 5 (694 aa).

The BED-type zinc-finger motif lies at 109–165; the sequence is RKYDESYLSFGFTYFGNRDAPHAQCVLCKKILSNSSLAPSKLRRHLETKHAAYKDKD. Zn(2+) is bound by residues Cys133, Cys136, His153, and His158.

This is Zinc finger BED domain-containing protein 5 (ZBED5) from Canis lupus familiaris (Dog).